A 149-amino-acid polypeptide reads, in one-letter code: Prefoldin subunit alpha (149 aa).

This sequence belongs to the prefoldin subunit alpha family. As to quaternary structure, heterohexamer of two alpha and four beta subunits.

Its subcellular location is the cytoplasm. Functionally, molecular chaperone capable of stabilizing a range of proteins. Seems to fulfill an ATP-independent, HSP70-like function in archaeal de novo protein folding. This Methanospirillum hungatei JF-1 (strain ATCC 27890 / DSM 864 / NBRC 100397 / JF-1) protein is Prefoldin subunit alpha.